We begin with the raw amino-acid sequence, 158 residues long: MSSNKILLTSSDGESFEIDEAVARKFLIIVHMMEDNCAGEAIPLENVTGDILSKIIEYAKMHVNEPSEEDEDEEAKKNLDSWDAKFMEKLDLETIFKIILAANYLNFEGLLGFASQTVADYIKDKTPEEVREIFNIENDFTPEEEEEIRKENAWTFNE.

The interval 99–157 is interaction with the F-box domain of F-box proteins; sequence ILAANYLNFEGLLGFASQTVADYIKDKTPEEVREIFNIENDFTPEEEEEIRKENAWTFN.

Belongs to the SKP1 family. As to quaternary structure, part of a SCF (SKP1-cullin-F-box) protein ligase complex. Interacts with CPR1/CPR30, EBF1, SKP2A, At3g61590, At4g38940 and At5g49610. Expressed in young seedlings, roots, leaves, floral stems, inflorescences, pollen, and siliques.

Its subcellular location is the nucleus. Its pathway is protein modification; protein ubiquitination. Involved in ubiquitination and subsequent proteasomal degradation of target proteins. Together with CUL1, RBX1 and a F-box protein, it forms a SCF E3 ubiquitin ligase complex. The functional specificity of this complex depends on the type of F-box protein. In the SCF complex, it serves as an adapter that links the F-box protein to CUL1. The protein is SKP1-like protein 18 (ASK18) of Arabidopsis thaliana (Mouse-ear cress).